The primary structure comprises 485 residues: Putative ATP-dependent RNA helicase ste13 (485 aa).

The segment at 16–38 is disordered; the sequence is DRESFKGQMKAQPVDMRPKTEDV. A Q motif motif is present at residues 44-72; that stretch reads TEFEDYYLKRELLMGIFEAGFERPSPIQE. Residues 75–245 form the Helicase ATP-binding domain; it reads IPIALSGRDI…DKHLNKPYEI (171 aa). Position 88–95 (88–95) interacts with ATP; sequence AKNGTGKT. Residues 193–196 carry the DEAD box motif; that stretch reads DEAD. The Helicase C-terminal domain occupies 255–415; it reads GVTQYYAFVD…PIPPSIDPSL (161 aa). Positions 437-485 are disordered; sequence LAAQQAKGQEGYHNRPNNNRGGHPRGGGNRGGYRQSNRQPRYRGQQKAD.

It belongs to the DEAD box helicase family. DDX6/DHH1 subfamily.

The protein localises to the cytoplasm. It is found in the P-body. The catalysed reaction is ATP + H2O = ADP + phosphate + H(+). In terms of biological role, ATP-dependent RNA helicase involved in mRNA turnover, and more specifically in mRNA decapping. Is involved in G1/S DNA-damage checkpoint recovery, probably through the regulation of the translational status of a subset of mRNAs. May also have a role in translation and mRNA nuclear export. The sequence is that of Putative ATP-dependent RNA helicase ste13 (ste13) from Schizosaccharomyces pombe (strain 972 / ATCC 24843) (Fission yeast).